The following is a 444-amino-acid chain: Glutamate dehydrogenase (444 aa).

The active site involves Lys-124.

This sequence belongs to the Glu/Leu/Phe/Val dehydrogenases family. Homohexamer.

The catalysed reaction is L-glutamate + NAD(+) + H2O = 2-oxoglutarate + NH4(+) + NADH + H(+). The enzyme catalyses L-glutamate + NADP(+) + H2O = 2-oxoglutarate + NH4(+) + NADPH + H(+). This Bacteroides thetaiotaomicron (strain ATCC 29148 / DSM 2079 / JCM 5827 / CCUG 10774 / NCTC 10582 / VPI-5482 / E50) protein is Glutamate dehydrogenase (gdhA).